The primary structure comprises 177 residues: Translation initiation factor IF-3 (177 aa).

It belongs to the IF-3 family. In terms of assembly, monomer.

The protein localises to the cytoplasm. In terms of biological role, IF-3 binds to the 30S ribosomal subunit and shifts the equilibrium between 70S ribosomes and their 50S and 30S subunits in favor of the free subunits, thus enhancing the availability of 30S subunits on which protein synthesis initiation begins. This chain is Translation initiation factor IF-3, found in Elusimicrobium minutum (strain Pei191).